We begin with the raw amino-acid sequence, 259 residues long: Imidazole glycerol phosphate synthase subunit HisF (259 aa).

Residues D11 and D130 contribute to the active site.

Belongs to the HisA/HisF family. In terms of assembly, heterodimer of HisH and HisF.

It localises to the cytoplasm. The enzyme catalyses 5-[(5-phospho-1-deoxy-D-ribulos-1-ylimino)methylamino]-1-(5-phospho-beta-D-ribosyl)imidazole-4-carboxamide + L-glutamine = D-erythro-1-(imidazol-4-yl)glycerol 3-phosphate + 5-amino-1-(5-phospho-beta-D-ribosyl)imidazole-4-carboxamide + L-glutamate + H(+). It participates in amino-acid biosynthesis; L-histidine biosynthesis; L-histidine from 5-phospho-alpha-D-ribose 1-diphosphate: step 5/9. Its function is as follows. IGPS catalyzes the conversion of PRFAR and glutamine to IGP, AICAR and glutamate. The HisF subunit catalyzes the cyclization activity that produces IGP and AICAR from PRFAR using the ammonia provided by the HisH subunit. The polypeptide is Imidazole glycerol phosphate synthase subunit HisF (Oleidesulfovibrio alaskensis (strain ATCC BAA-1058 / DSM 17464 / G20) (Desulfovibrio alaskensis)).